Consider the following 249-residue polypeptide: Protein LicA homolog (249 aa).

Belongs to the peptidase S49 family.

In Metamycoplasma hominis (strain ATCC 23114 / DSM 25592 / NBRC 14850 / NCTC 10111 / PG21) (Mycoplasma hominis), this protein is Protein LicA homolog (licA).